The chain runs to 158 residues: METSQNPQSQFFIEHILQILPHRYPMLLVDRVVELEANKKIVAYKNITFNEDVFNGHFPNKPIFPGVLIVEGMAQSGGLLAFTSLWGFDPEMAKTKIVYFMTIDKVKFRIPVTPGDKLEYHLEVLKHKGMIWQVGGTAQVDGKVVAEAELKAMIAERD.

Residue histidine 57 is part of the active site.

It belongs to the thioester dehydratase family. FabZ subfamily.

It localises to the cytoplasm. It carries out the reaction a (3R)-hydroxyacyl-[ACP] = a (2E)-enoyl-[ACP] + H2O. Its function is as follows. Involved in unsaturated fatty acids biosynthesis. Catalyzes the dehydration of short chain beta-hydroxyacyl-ACPs and long chain saturated and unsaturated beta-hydroxyacyl-ACPs. In Helicobacter acinonychis (strain Sheeba), this protein is 3-hydroxyacyl-[acyl-carrier-protein] dehydratase FabZ.